A 244-amino-acid polypeptide reads, in one-letter code: Ribonuclease 3 (244 aa).

The region spanning 17-146 (FEKKMQELNL…FVGALYLDQG (130 aa)) is the RNase III domain. A Mg(2+)-binding site is contributed by Glu-59. Asp-63 is a catalytic residue. 2 residues coordinate Mg(2+): Asp-132 and Glu-135. Glu-135 is a catalytic residue. Residues 172 to 241 (DFKTQFQEYV…AERAYKILKN (70 aa)) enclose the DRBM domain.

This sequence belongs to the ribonuclease III family. Homodimer. It depends on Mg(2+) as a cofactor.

The protein localises to the cytoplasm. The catalysed reaction is Endonucleolytic cleavage to 5'-phosphomonoester.. Its function is as follows. Digests double-stranded RNA. Involved in the processing of primary rRNA transcript to yield the immediate precursors to the large and small rRNAs (23S and 16S). Processes some mRNAs, and tRNAs when they are encoded in the rRNA operon. Processes pre-crRNA and tracrRNA of type II CRISPR loci if present in the organism. In Staphylococcus saprophyticus subsp. saprophyticus (strain ATCC 15305 / DSM 20229 / NCIMB 8711 / NCTC 7292 / S-41), this protein is Ribonuclease 3.